The sequence spans 284 residues: Shikimate dehydrogenase (NADP(+)) (284 aa).

Residues 19–21 (SFS) and T66 contribute to the shikimate site. The active-site Proton acceptor is K70. D82 is a binding site for NADP(+). Positions 91 and 106 each coordinate shikimate. NADP(+) is bound by residues 130–134 (GSGGS) and I226. Y228 is a shikimate binding site. G249 lines the NADP(+) pocket.

It belongs to the shikimate dehydrogenase family. Homodimer.

The enzyme catalyses shikimate + NADP(+) = 3-dehydroshikimate + NADPH + H(+). The protein operates within metabolic intermediate biosynthesis; chorismate biosynthesis; chorismate from D-erythrose 4-phosphate and phosphoenolpyruvate: step 4/7. Its function is as follows. Involved in the biosynthesis of the chorismate, which leads to the biosynthesis of aromatic amino acids. Catalyzes the reversible NADPH linked reduction of 3-dehydroshikimate (DHSA) to yield shikimate (SA). The chain is Shikimate dehydrogenase (NADP(+)) from Methanococcus vannielii (strain ATCC 35089 / DSM 1224 / JCM 13029 / OCM 148 / SB).